A 286-amino-acid chain; its full sequence is Ribosome-inactivating protein momordin I (286 aa).

Positions 1–23 (MSRFSVLSFLILAIFLGGSIVKG) are cleaved as a signal peptide. The active site involves Glu183. An N-linked (GlcNAc...) asparagine glycan is attached at Asn250. Residues 270–286 (AEGDNGDVSTTHGFSSY) constitute a propeptide, removed in mature form.

It belongs to the ribosome-inactivating protein family. Type 1 RIP subfamily.

It carries out the reaction Endohydrolysis of the N-glycosidic bond at one specific adenosine on the 28S rRNA.. The polypeptide is Ribosome-inactivating protein momordin I (Momordica charantia (Bitter gourd)).